Here is a 471-residue protein sequence, read N- to C-terminus: Argininosuccinate lyase (471 aa).

The protein belongs to the lyase 1 family. Argininosuccinate lyase subfamily.

The protein resides in the cytoplasm. The enzyme catalyses 2-(N(omega)-L-arginino)succinate = fumarate + L-arginine. It functions in the pathway amino-acid biosynthesis; L-arginine biosynthesis; L-arginine from L-ornithine and carbamoyl phosphate: step 3/3. This is Argininosuccinate lyase from Cereibacter sphaeroides (strain ATCC 17023 / DSM 158 / JCM 6121 / CCUG 31486 / LMG 2827 / NBRC 12203 / NCIMB 8253 / ATH 2.4.1.) (Rhodobacter sphaeroides).